The sequence spans 97 residues: UPF0729 protein GD16342 (97 aa).

The interval 64-97 (KPEKASVGPAEESQNPPLNAIAAETEVDESKKEI) is disordered. A Phosphoserine modification is found at serine 69.

This sequence belongs to the UPF0729 family.

The protein is UPF0729 protein GD16342 of Drosophila simulans (Fruit fly).